Consider the following 121-residue polypeptide: Ribonuclease P protein component (121 aa).

This sequence belongs to the RnpA family. As to quaternary structure, consists of a catalytic RNA component (M1 or rnpB) and a protein subunit.

It carries out the reaction Endonucleolytic cleavage of RNA, removing 5'-extranucleotides from tRNA precursor.. Functionally, RNaseP catalyzes the removal of the 5'-leader sequence from pre-tRNA to produce the mature 5'-terminus. It can also cleave other RNA substrates such as 4.5S RNA. The protein component plays an auxiliary but essential role in vivo by binding to the 5'-leader sequence and broadening the substrate specificity of the ribozyme. This Erythrobacter litoralis (strain HTCC2594) protein is Ribonuclease P protein component.